The following is a 92-amino-acid chain: Acylphosphatase (92 aa).

Positions arginine 5 to threonine 92 constitute an Acylphosphatase-like domain. Catalysis depends on residues arginine 20 and asparagine 38.

Belongs to the acylphosphatase family.

It catalyses the reaction an acyl phosphate + H2O = a carboxylate + phosphate + H(+). The polypeptide is Acylphosphatase (acyP) (Chlorobaculum tepidum (strain ATCC 49652 / DSM 12025 / NBRC 103806 / TLS) (Chlorobium tepidum)).